The sequence spans 879 residues: Valine--tRNA ligase (879 aa).

The 'HIGH' region motif lies at Pro-45–His-55. Positions Lys-521–Ser-525 match the 'KMSKS' region motif. Position 524 (Lys-524) interacts with ATP. Residues Leu-806–Lys-879 adopt a coiled-coil conformation.

This sequence belongs to the class-I aminoacyl-tRNA synthetase family. ValS type 1 subfamily. In terms of assembly, monomer.

The protein localises to the cytoplasm. It carries out the reaction tRNA(Val) + L-valine + ATP = L-valyl-tRNA(Val) + AMP + diphosphate. Its function is as follows. Catalyzes the attachment of valine to tRNA(Val). As ValRS can inadvertently accommodate and process structurally similar amino acids such as threonine, to avoid such errors, it has a 'posttransfer' editing activity that hydrolyzes mischarged Thr-tRNA(Val) in a tRNA-dependent manner. This Lactobacillus acidophilus (strain ATCC 700396 / NCK56 / N2 / NCFM) protein is Valine--tRNA ligase.